The sequence spans 104 residues: Large ribosomal subunit protein uL24 (104 aa).

Belongs to the universal ribosomal protein uL24 family. As to quaternary structure, part of the 50S ribosomal subunit.

Functionally, one of two assembly initiator proteins, it binds directly to the 5'-end of the 23S rRNA, where it nucleates assembly of the 50S subunit. One of the proteins that surrounds the polypeptide exit tunnel on the outside of the subunit. In Corynebacterium kroppenstedtii (strain DSM 44385 / JCM 11950 / CIP 105744 / CCUG 35717), this protein is Large ribosomal subunit protein uL24.